Reading from the N-terminus, the 376-residue chain is Probable low-specificity L-threonine aldolase (376 aa).

The span at 1–21 shows a compositional bias: polar residues; that stretch reads MSGSVTSTTTETRLCPSNQGS. The disordered stretch occupies residues 1 to 22; the sequence is MSGSVTSTTTETRLCPSNQGSA. At Lys226 the chain carries N6-(pyridoxal phosphate)lysine.

Belongs to the threonine aldolase family. Homotetramer. Pyridoxal 5'-phosphate serves as cofactor.

The enzyme catalyses L-threonine = acetaldehyde + glycine. The catalysed reaction is L-allo-threonine = acetaldehyde + glycine. Its pathway is amino-acid degradation; L-threonine degradation via aldolase pathway; acetaldehyde and glycine from L-threonine: step 1/1. The chain is Probable low-specificity L-threonine aldolase (gly1) from Schizosaccharomyces pombe (strain 972 / ATCC 24843) (Fission yeast).